A 1025-amino-acid chain; its full sequence is MPIDYAELHCLSCFSFLRGASQPAELVQRAAELGYRALALTDACSVAGAVRAHQAAKETDLHLIHGSEIRIHQGPLLVLLAPCRRAWAELCALISLGRSQARKGDYRLEREQLEGTLPHCLALWVPDDAPHDAEQGRWFARHFGDRGHVAVALHHGPDDEARLQRLLALADRFRLPAVAAGGVLMHRRGRRALQDTLSALRHRRTLAAMGTALECSGERHLRSLHSLARLYPPALLRRSVHLADQCRFSLDKLRYEYPAELVPAGETPASYLRRLTLEGARRHWPQGMPDKVAHQVDHELALIAEMGYEPFFLTVHDVVAFARRRGILCQGRGSSANSAVCFCLGITAVDPARQSLLFERFISKERGEPPDIDVDFEHERREEVIQYIYRKYGRHRAALAATVIRYRPRSALRDAGRALGLDAATIDRLAGSIQWWDGKRVDPERLREAGLNPDDPRLARTVAIAGQLLGLPRHLSQHVGGFVISEGPISELVPTENAAMAGRTIIQWDKDDLEALGLLKVDVLALGMLSCIRRAFDLLAGFRGRRLTLADVPAEDPAVYRMISDADTMGVFQIESRAQMAMLPRLRPQTFYDLVIEVAIVRPGPIQGDMVHPYLRRREGLEPVDYPSEAVRGVLARTLGVPIFQEQVMQLAVVAAGFTPGEADALRRAMAAWKRKGGLGPFRDKLLKGMRRNGYCEDYAERLFRQIQGFGEYGFPESHAASFALLVYVSAWLKCHEPALFTCALLNSQPMGFYAPAQLLRDAERHGVEIRPVDVRHSDWDCSPEHRGDGEPALRLGLRLVRGLNRRAADRLIAARGRRPFRDVQEMARRAALHRRDLETLAHAGALRGLAGHRRAAWWQVLGAEAGLPVFEDLHIEEAAPALDAPAEGEDLVADYTSLGFTLGRHPLALLRPQLRRRRLLTAADLASTGHGRLVRTAGLVINRQRPGSAGGVTFLTLEDETGQINLVVWKATAEAQRRTLLAARLLMVSGIWERKGAVTHLVAGRLEDWSDWLGALDVRSRDFH.

It belongs to the DNA polymerase type-C family. DnaE2 subfamily.

The protein localises to the cytoplasm. The enzyme catalyses DNA(n) + a 2'-deoxyribonucleoside 5'-triphosphate = DNA(n+1) + diphosphate. Its function is as follows. DNA polymerase involved in damage-induced mutagenesis and translesion synthesis (TLS). It is not the major replicative DNA polymerase. The protein is Error-prone DNA polymerase of Alkalilimnicola ehrlichii (strain ATCC BAA-1101 / DSM 17681 / MLHE-1).